The primary structure comprises 260 residues: MSTNNSVLVLKVGGALLQCEMGMARLMDTAAAMIANGQQVLMVHGGGCLVDEQLAANGMETVKLEGLRVTPPEQMPIIAGALAGTSNKILQGAATKAGIVSVGMSLADGNTVSAKIKDERLGLVGEVSPKDATYLKFILSQGWMPICSSIAMMDDGQMLNVNADQAATVLAKLVGGKLVLLSDVSGVLDGKGQLIPSLTGQQIAELVKQGVIEKGMKVKVEAALEVAQWMGQAVQVASWRDASQLVALAKGEAVGTQIQP.

Substrate-binding positions include 46 to 47, Arg68, and Asn160; that span reads GG.

The protein belongs to the acetylglutamate kinase family. ArgB subfamily.

It is found in the cytoplasm. It catalyses the reaction N-acetyl-L-glutamate + ATP = N-acetyl-L-glutamyl 5-phosphate + ADP. The protein operates within amino-acid biosynthesis; L-arginine biosynthesis; N(2)-acetyl-L-ornithine from L-glutamate: step 2/4. Its function is as follows. Catalyzes the ATP-dependent phosphorylation of N-acetyl-L-glutamate. This is Acetylglutamate kinase from Shewanella sp. (strain MR-7).